The primary structure comprises 192 residues: Ribosomal RNA small subunit methyltransferase G (192 aa).

Residues G59, 111–112 (IE), and R124 contribute to the S-adenosyl-L-methionine site.

It belongs to the methyltransferase superfamily. RNA methyltransferase RsmG family.

It localises to the cytoplasm. Functionally, specifically methylates the N7 position of a guanine in 16S rRNA. The polypeptide is Ribosomal RNA small subunit methyltransferase G (Mycoplasma genitalium (strain ATCC 33530 / DSM 19775 / NCTC 10195 / G37) (Mycoplasmoides genitalium)).